Consider the following 158-residue polypeptide: NAD(P)H-quinone oxidoreductase subunit J, chloroplastic (158 aa).

The protein belongs to the complex I 30 kDa subunit family. As to quaternary structure, NDH is composed of at least 16 different subunits, 5 of which are encoded in the nucleus.

The protein resides in the plastid. It is found in the chloroplast thylakoid membrane. It catalyses the reaction a plastoquinone + NADH + (n+1) H(+)(in) = a plastoquinol + NAD(+) + n H(+)(out). The catalysed reaction is a plastoquinone + NADPH + (n+1) H(+)(in) = a plastoquinol + NADP(+) + n H(+)(out). NDH shuttles electrons from NAD(P)H:plastoquinone, via FMN and iron-sulfur (Fe-S) centers, to quinones in the photosynthetic chain and possibly in a chloroplast respiratory chain. The immediate electron acceptor for the enzyme in this species is believed to be plastoquinone. Couples the redox reaction to proton translocation, and thus conserves the redox energy in a proton gradient. The polypeptide is NAD(P)H-quinone oxidoreductase subunit J, chloroplastic (Jasminum nudiflorum (Winter jasmine)).